Consider the following 352-residue polypeptide: Protein RecA (352 aa).

ATP is bound at residue 64–71 (GPESSGKT). Residues 328–352 (NPSSVPEAEAEHDPEQDEEPTFDLE) form a disordered region. A compositionally biased stretch (acidic residues) spans 335–352 (AEAEHDPEQDEEPTFDLE).

This sequence belongs to the RecA family.

The protein resides in the cytoplasm. Its function is as follows. Can catalyze the hydrolysis of ATP in the presence of single-stranded DNA, the ATP-dependent uptake of single-stranded DNA by duplex DNA, and the ATP-dependent hybridization of homologous single-stranded DNAs. It interacts with LexA causing its activation and leading to its autocatalytic cleavage. In Brevibacillus brevis (strain 47 / JCM 6285 / NBRC 100599), this protein is Protein RecA.